The primary structure comprises 691 residues: L-type lectin-domain containing receptor kinase S.6 (691 aa).

A signal peptide spans 1–25 (MNHHHYSLVIFHLILFLSLDFPTLS). The Extracellular segment spans residues 26 to 311 (HRFSPPLQNL…VVGLKIPVWS (286 aa)). The interval 27–257 (RFSPPLQNLT…LHIVERWKFR (231 aa)) is legume-lectin like. Asn-34 and Asn-89 each carry an N-linked (GlcNAc...) asparagine glycan. A helical transmembrane segment spans residues 312–332 (LLPGLAAIVILVAFIVFSLIC). The Cytoplasmic portion of the chain corresponds to 333-691 (GKKRISEEAD…PWMTPKSHFS (359 aa)). In terms of domain architecture, Protein kinase spans 366 to 653 (FNENAIVGQG…IRGEAPLPVL (288 aa)). ATP contacts are provided by residues 372-380 (VGQGASATV) and Lys-394. Asp-500 serves as the catalytic Proton acceptor.

This sequence in the C-terminal section; belongs to the protein kinase superfamily. Ser/Thr protein kinase family. It in the N-terminal section; belongs to the leguminous lectin family.

Its subcellular location is the cell membrane. The enzyme catalyses L-seryl-[protein] + ATP = O-phospho-L-seryl-[protein] + ADP + H(+). The catalysed reaction is L-threonyl-[protein] + ATP = O-phospho-L-threonyl-[protein] + ADP + H(+). Its function is as follows. Involved in resistance response to the pathogenic oomycetes Phytophthora infestans and Phytophthora capsici and to the pathogenic bacteria Pseudomonas syringae. The sequence is that of L-type lectin-domain containing receptor kinase S.6 from Arabidopsis thaliana (Mouse-ear cress).